Consider the following 404-residue polypeptide: Glycosylated lysosomal membrane protein B (404 aa).

An N-terminal signal peptide occupies residues 1-24 (MSCTRGWRLILLGLLCVGLLGTRG). Residues 25–364 (QDESRKVSVQ…YGDPPRDSFS (340 aa)) are Lumenal-facing. 15 N-linked (GlcNAc...) asparagine glycosylation sites follow: N85, N124, N128, N142, N152, N156, N163, N168, N178, N189, N205, N221, N266, N303, and N330. A helical membrane pass occupies residues 365–385 (ILVICIMAVALGTPLLLLIIG). The Cytoplasmic portion of the chain corresponds to 386-404 (TVLVTAVRHKVYPNYQPIN). A Lysosomal targeting motif motif is present at residues 400–404 (YQPIN).

Belongs to the GLMP family. As to quaternary structure, interacts (via lumenal domain) with lysosomal protein MFSD1; the interaction starts while both proteins are still in the endoplasmic reticulum and is required for stabilization of MFSD1 in lysosomes but has no direct effect on its targeting to lysosomes or transporter activity.

It localises to the lysosome membrane. Required to protect lysosomal transporter MFSD1 from lysosomal proteolysis and for MFSD1 lysosomal localization. The protein is Glycosylated lysosomal membrane protein B (glmp-b) of Xenopus laevis (African clawed frog).